The primary structure comprises 226 residues: Orotate phosphoribosyltransferase (226 aa).

Lys-29 contacts 5-phospho-alpha-D-ribose 1-diphosphate. Residue 37 to 38 (FF) participates in orotate binding. 5-phospho-alpha-D-ribose 1-diphosphate-binding positions include 75-76 (YK), Arg-101, Lys-102, Lys-105, His-107, and 126-134 (DDVISAGTS). Orotate is bound by residues Ser-130 and Arg-158.

The protein belongs to the purine/pyrimidine phosphoribosyltransferase family. PyrE subfamily. Homodimer. The cofactor is Mg(2+).

The enzyme catalyses orotidine 5'-phosphate + diphosphate = orotate + 5-phospho-alpha-D-ribose 1-diphosphate. It functions in the pathway pyrimidine metabolism; UMP biosynthesis via de novo pathway; UMP from orotate: step 1/2. Its function is as follows. Catalyzes the transfer of a ribosyl phosphate group from 5-phosphoribose 1-diphosphate to orotate, leading to the formation of orotidine monophosphate (OMP). The protein is Orotate phosphoribosyltransferase of Ralstonia nicotianae (strain ATCC BAA-1114 / GMI1000) (Ralstonia solanacearum).